The chain runs to 510 residues: MEEIQRYLQLERYHQHDFLYPLIFQEYIYTFAHDRDYNRSILSENSCYEKKFSLLIVKRLITRMYQQNHFLIFSNDSNQNPFEGRNKNFYFQIISEGFALIAEIPFSRRLRASLKEKKIVKFQNLRSIQAIFSFLEDSFSHLNFVLDILIPHSVHVEILVQTLRYWVKDASSLHLLRFFLNEYCNSNSLITPKEVSSSFSTKRNKRLFLFLYNSHVCEYESILVFLRKQSSHLRSTSSGLLLERIYFYAKIERLVNLFVKVKGFQVNLWLVKEPCMHYVRYQRKSIWASNGASLLIKKWKSYLVAFWQWHFSMWFHPRRISINQLSNHSLEFLGYHSSVRMNPSVVRSQSLENSFLINNALKKFDTLVPIISLIAALAQAKFCNVLGDPISKPVWADLSDSNIIYRFGHICRNLSHYYSGSSKKNSLYRIKYILRLSCARTLARKHKSTVRAFLKKLGSELLEEFLMSEKDVLSLTFPKASSIFGGGYRRQIWYLDIISINDLANHKSKF.

Belongs to the intron maturase 2 family. MatK subfamily.

It localises to the plastid. The protein localises to the chloroplast. In terms of biological role, usually encoded in the trnK tRNA gene intron. Probably assists in splicing its own and other chloroplast group II introns. This Gratiola officinalis (Hedgehyssop) protein is Maturase K.